The primary structure comprises 150 residues: Large ribosomal subunit protein bL9 (150 aa).

Belongs to the bacterial ribosomal protein bL9 family.

Its function is as follows. Binds to the 23S rRNA. This Yersinia enterocolitica serotype O:8 / biotype 1B (strain NCTC 13174 / 8081) protein is Large ribosomal subunit protein bL9.